The following is a 508-amino-acid chain: Phenylalanine--tRNA ligase alpha subunit (508 aa).

An N-acetylalanine modification is found at Ala2. Residue Thr190 is modified to Phosphothreonine. 2 positions are modified to phosphoserine: Ser193 and Ser301. Residue Lys311 is modified to N6-acetyllysine. Residues Thr329, 372-374 (QIE), and Tyr412 contribute to the L-phenylalanine site. Glu414 provides a ligand contact to Mg(2+). Phe438 is an L-phenylalanine binding site.

It belongs to the class-II aminoacyl-tRNA synthetase family. Phe-tRNA synthetase alpha subunit type 2 subfamily. Heterotetramer; dimer of two heterodimers formed by FARSA and FARSB. Mg(2+) is required as a cofactor.

Its subcellular location is the cytoplasm. The enzyme catalyses tRNA(Phe) + L-phenylalanine + ATP = L-phenylalanyl-tRNA(Phe) + AMP + diphosphate + H(+). This is Phenylalanine--tRNA ligase alpha subunit (FARSA) from Pongo abelii (Sumatran orangutan).